Reading from the N-terminus, the 314-residue chain is Glycerol-3-phosphate dehydrogenase [NAD(P)+] (314 aa).

NADPH is bound by residues F11, R30, and K96. K96, G124, and S126 together coordinate sn-glycerol 3-phosphate. NADPH is bound at residue A128. Residues K179, D232, S242, R243, and N244 each coordinate sn-glycerol 3-phosphate. The active-site Proton acceptor is the K179. R243 provides a ligand contact to NADPH. E264 serves as a coordination point for NADPH.

This sequence belongs to the NAD-dependent glycerol-3-phosphate dehydrogenase family.

Its subcellular location is the cytoplasm. It carries out the reaction sn-glycerol 3-phosphate + NAD(+) = dihydroxyacetone phosphate + NADH + H(+). The catalysed reaction is sn-glycerol 3-phosphate + NADP(+) = dihydroxyacetone phosphate + NADPH + H(+). Its pathway is membrane lipid metabolism; glycerophospholipid metabolism. Its function is as follows. Catalyzes the reduction of the glycolytic intermediate dihydroxyacetone phosphate (DHAP) to sn-glycerol 3-phosphate (G3P), the key precursor for phospholipid synthesis. This Paracoccus denitrificans (strain Pd 1222) protein is Glycerol-3-phosphate dehydrogenase [NAD(P)+].